Here is a 237-residue protein sequence, read N- to C-terminus: Type II secretion system protein J (237 aa).

The propeptide at Met1–Gly6 is leader sequence. Phe7 is modified (N-methylphenylalanine). Residues Phe7 to Met29 form a helical membrane-spanning segment. The interval Pro203–Glu237 is disordered. Positions Gln212–Gly224 are enriched in gly residues. Over residues Pro226–Glu237 the composition is skewed to pro residues.

The protein belongs to the GSP J family. As to quaternary structure, type II secretion is composed of four main components: the outer membrane complex, the inner membrane complex, the cytoplasmic secretion ATPase and the periplasm-spanning pseudopilus. Forms the tip of the type II pseudopilus by interacting with XcpV, XcpU and XcpX. Interacts with core component XcpT. Post-translationally, cleaved by prepilin peptidase. Methylated by prepilin peptidase at the amino group of the N-terminal phenylalanine once the leader sequence is cleaved by prepilin peptidase.

It localises to the cell inner membrane. In terms of biological role, component of the type II secretion system required for the energy-dependent secretion of extracellular factors such as proteases and toxins from the periplasm. Part of the pseudopilus tip complex that is critical for the recognition and binding of secretion substrates. Type II pseudopilus confers increased bacterial adhesive capabilities. The protein is Type II secretion system protein J (xcpW) of Pseudomonas aeruginosa (strain ATCC 15692 / DSM 22644 / CIP 104116 / JCM 14847 / LMG 12228 / 1C / PRS 101 / PAO1).